The primary structure comprises 99 residues: Plastocyanin (99 aa).

The Plastocyanin-like domain occupies 1–99 (VEVLMGGSGG…IGMSGIVTVN (99 aa)). The Cu cation site is built by histidine 37, cysteine 84, histidine 87, and methionine 92.

Belongs to the plastocyanin family. Cu(2+) is required as a cofactor.

The protein resides in the plastid. It is found in the chloroplast thylakoid membrane. Its function is as follows. Participates in electron transfer between P700 and the cytochrome b6-f complex in photosystem I. The chain is Plastocyanin (PETE) from Ginkgo biloba (Ginkgo).